We begin with the raw amino-acid sequence, 520 residues long: Eukaryotic translation initiation factor 3 subunit L (520 aa).

A PCI domain is found at 278-478 (FATYYYVGIC…ELDIALENDL (201 aa)).

Belongs to the eIF-3 subunit L family. As to quaternary structure, component of the eukaryotic translation initiation factor 3 (eIF-3) complex.

It localises to the cytoplasm. Its function is as follows. Component of the eukaryotic translation initiation factor 3 (eIF-3) complex, which is involved in protein synthesis of a specialized repertoire of mRNAs and, together with other initiation factors, stimulates binding of mRNA and methionyl-tRNAi to the 40S ribosome. The eIF-3 complex specifically targets and initiates translation of a subset of mRNAs involved in cell proliferation. The protein is Eukaryotic translation initiation factor 3 subunit L of Yarrowia lipolytica (strain CLIB 122 / E 150) (Yeast).